A 24-amino-acid polypeptide reads, in one-letter code: Coenzyme PQQ synthesis protein A (24 aa).

Residues 16–20 constitute a cross-link (pyrroloquinoline quinone (Glu-Tyr)); it reads EVTMY.

Belongs to the PqqA family.

Its pathway is cofactor biosynthesis; pyrroloquinoline quinone biosynthesis. In terms of biological role, required for coenzyme pyrroloquinoline quinone (PQQ) biosynthesis. PQQ is probably formed by cross-linking a specific glutamate to a specific tyrosine residue and excising these residues from the peptide. The sequence is that of Coenzyme PQQ synthesis protein A from Pseudomonas syringae pv. syringae (strain B728a).